We begin with the raw amino-acid sequence, 203 residues long: Inosine triphosphate pyrophosphatase (203 aa).

Residue 13 to 18 (TGNAKK) coordinates ITP. Glu-43 contributes to the Mg(2+) binding site. Residues Lys-55, 71–72 (DT), Lys-88, 147–150 (FGWD), Lys-170, and 175–176 (HR) contribute to the ITP site.

It belongs to the HAM1 NTPase family. In terms of assembly, homodimer. Requires Mg(2+) as cofactor. Mn(2+) is required as a cofactor.

The protein localises to the cytoplasm. The catalysed reaction is ITP + H2O = IMP + diphosphate + H(+). It carries out the reaction dITP + H2O = dIMP + diphosphate + H(+). It catalyses the reaction XTP + H2O = XMP + diphosphate + H(+). The enzyme catalyses N(6)-hydroxy-dATP + H2O = N(6)-hydroxy-dAMP + diphosphate + H(+). Functionally, pyrophosphatase that hydrolyzes the non-canonical purine nucleotides inosine triphosphate (ITP), deoxyinosine triphosphate (dITP) as well as 2'-deoxy-N-6-hydroxylaminopurine triphosphate (dHAPTP) and xanthosine 5'-triphosphate (XTP) to their respective monophosphate derivatives. The enzyme does not distinguish between the deoxy- and ribose forms. Probably excludes non-canonical purines from RNA and DNA precursor pools, thus preventing their incorporation into RNA and DNA and avoiding chromosomal lesions. In Danio rerio (Zebrafish), this protein is Inosine triphosphate pyrophosphatase (itpa).